The following is a 440-amino-acid chain: Probable exopolygalacturonase B (440 aa).

The first 20 residues, 1-20, serve as a signal peptide directing secretion; the sequence is MRLHFLPLVALCATTASSLA. N-linked (GlcNAc...) asparagine glycosylation is found at asparagine 65, asparagine 190, and asparagine 230. The Proton donor role is filled by aspartate 260. A disulfide bond links cysteine 262 and cysteine 279. Residues asparagine 268 and asparagine 280 are each glycosylated (N-linked (GlcNAc...) asparagine). Residue histidine 283 is part of the active site. N-linked (GlcNAc...) asparagine glycosylation is found at asparagine 307, asparagine 334, and asparagine 371. Cysteine 397 and cysteine 403 are oxidised to a cystine. Asparagine 412 carries N-linked (GlcNAc...) asparagine glycosylation.

The protein belongs to the glycosyl hydrolase 28 family.

It is found in the secreted. The catalysed reaction is [(1-&gt;4)-alpha-D-galacturonosyl](n) + H2O = alpha-D-galacturonate + [(1-&gt;4)-alpha-D-galacturonosyl](n-1). In terms of biological role, specific in hydrolyzing the terminal glycosidic bond of polygalacturonic acid and oligogalacturonates. The protein is Probable exopolygalacturonase B (pgxB) of Emericella nidulans (strain FGSC A4 / ATCC 38163 / CBS 112.46 / NRRL 194 / M139) (Aspergillus nidulans).